A 78-amino-acid polypeptide reads, in one-letter code: Large ribosomal subunit protein bL28 (78 aa).

The tract at residues 1-21 is disordered; the sequence is MSRVCQVTGKKPMVGNNRSHA.

This sequence belongs to the bacterial ribosomal protein bL28 family.

This is Large ribosomal subunit protein bL28 from Shewanella woodyi (strain ATCC 51908 / MS32).